We begin with the raw amino-acid sequence, 148 residues long: Homoprotocatechuate degradative operon repressor (148 aa).

The HTH marR-type domain maps to 2–134 (HDSLTIALLQ…LTHLLEEFIA (133 aa)).

In terms of biological role, repressor for the homoprotocatechuate catabolic pathway hpc operon. In Escherichia coli, this protein is Homoprotocatechuate degradative operon repressor (hpcR).